We begin with the raw amino-acid sequence, 165 residues long: Small ribosomal subunit protein uS5 (165 aa).

Residues 10–73 enclose the S5 DRBM domain; the sequence is LKEKVVSISR…EDAKKNLVEV (64 aa).

It belongs to the universal ribosomal protein uS5 family. In terms of assembly, part of the 30S ribosomal subunit. Contacts proteins S4 and S8.

With S4 and S12 plays an important role in translational accuracy. Its function is as follows. Located at the back of the 30S subunit body where it stabilizes the conformation of the head with respect to the body. This is Small ribosomal subunit protein uS5 from Clostridium perfringens (strain ATCC 13124 / DSM 756 / JCM 1290 / NCIMB 6125 / NCTC 8237 / Type A).